The sequence spans 195 residues: 3-isopropylmalate dehydratase small subunit (195 aa).

This sequence belongs to the LeuD family. LeuD type 1 subfamily. Heterodimer of LeuC and LeuD.

It carries out the reaction (2R,3S)-3-isopropylmalate = (2S)-2-isopropylmalate. The protein operates within amino-acid biosynthesis; L-leucine biosynthesis; L-leucine from 3-methyl-2-oxobutanoate: step 2/4. In terms of biological role, catalyzes the isomerization between 2-isopropylmalate and 3-isopropylmalate, via the formation of 2-isopropylmaleate. In Corynebacterium kroppenstedtii (strain DSM 44385 / JCM 11950 / CIP 105744 / CCUG 35717), this protein is 3-isopropylmalate dehydratase small subunit.